The sequence spans 95 residues: Co-chaperonin GroES (95 aa).

This sequence belongs to the GroES chaperonin family. As to quaternary structure, heptamer of 7 subunits arranged in a ring. Interacts with the chaperonin GroEL.

Its subcellular location is the cytoplasm. In terms of biological role, together with the chaperonin GroEL, plays an essential role in assisting protein folding. The GroEL-GroES system forms a nano-cage that allows encapsulation of the non-native substrate proteins and provides a physical environment optimized to promote and accelerate protein folding. GroES binds to the apical surface of the GroEL ring, thereby capping the opening of the GroEL channel. The protein is Co-chaperonin GroES of Jannaschia sp. (strain CCS1).